A 507-amino-acid chain; its full sequence is Beta-Ala-His dipeptidase (507 aa).

Positions 1-26 are cleaved as a signal peptide; the sequence is MDPKLGRMAASLLAVLLLLLERGMFS. Histidine 132 provides a ligand contact to Zn(2+). Aspartate 134 is an active-site residue. A Zn(2+)-binding site is contributed by aspartate 165. Glutamate 199 functions as the Proton acceptor in the catalytic mechanism. Glutamate 200 lines the Zn(2+) pocket. Serine 219 bears the Phosphoserine mark. A Zn(2+)-binding site is contributed by aspartate 228. N-linked (GlcNAc...) asparagine glycans are attached at residues asparagine 322 and asparagine 382. Histidine 478 provides a ligand contact to Zn(2+).

Belongs to the peptidase M20A family. In terms of assembly, homodimer. Zn(2+) is required as a cofactor. Found in serum and adult nervous central system. Absent in serum from patients with homocarnosinosis.

The protein localises to the secreted. It carries out the reaction Preferential hydrolysis of the beta-Ala-|-His dipeptide (carnosine), and also anserine, Xaa-|-His dipeptides and other dipeptides including homocarnosine.. The catalysed reaction is carnosine + H2O = beta-alanine + L-histidine. It catalyses the reaction anserine + H2O = N(pros)-methyl-L-histidine + beta-alanine. The enzyme catalyses L-alanyl-L-histidine + H2O = L-histidine + L-alanine. It carries out the reaction glycyl-L-histidine + H2O = L-histidine + glycine. The catalysed reaction is L-homocarnosine + H2O = 4-aminobutanoate + L-histidine. With respect to regulation, activated by cadmium ions. Inhibited by the metal chelator 1,10-o-phenantrolin. The inhibitory concentration 50% (IC(50)) is 5 uM. In terms of biological role, catalyzes the peptide bond hydrolysis in Xaa-His dipeptides, displaying the highest activity toward carnosine (beta-alanyl-L-histidine) and anserine (beta-alanyl-3-methyl-histidine). In Homo sapiens (Human), this protein is Beta-Ala-His dipeptidase.